Here is a 624-residue protein sequence, read N- to C-terminus: Actin-related protein 8 (624 aa).

Met-1 carries the post-translational modification N-acetylmethionine. Residues 1-25 (MTQAEKGEAENGKEKGGEKEKEQRG) show a composition bias toward basic and acidic residues. The tract at residues 1–29 (MTQAEKGEAENGKEKGGEKEKEQRGVKRP) is disordered. Ser-55 and Thr-56 together coordinate ATP. A Phosphoserine modification is found at Ser-132. 283 to 286 (DVGD) lines the ATP pocket. Residue Ser-412 is modified to Phosphoserine. The tract at residues 430–462 (SKQEQSAKATADRKSASKPIGFEGDLRGQSSDL) is disordered.

Belongs to the actin family. ARP8 subfamily. Component of the chromatin remodeling INO80 complex; specifically part of a complex module associated with the DBINO domain of INO80. Exists as monomers and dimers, but the dimer is most probably the biologically relevant form required for stable interactions with histones that exploits the twofold symmetry of the nucleosome core.

Its subcellular location is the nucleus. The protein resides in the chromosome. In terms of biological role, plays an important role in the functional organization of mitotic chromosomes. Exhibits low basal ATPase activity, and unable to polymerize. Its function is as follows. Proposed core component of the chromatin remodeling INO80 complex which is involved in transcriptional regulation, DNA replication and probably DNA repair. Required for the recruitment of INO80 (and probably the INO80 complex) to sites of DNA damage Strongly prefer nucleosomes and H3-H4 tetramers over H2A-H2B dimers, suggesting it may act as a nucleosome recognition module within the complex. This Bos taurus (Bovine) protein is Actin-related protein 8 (ACTR8).